Consider the following 95-residue polypeptide: Aspartyl/glutamyl-tRNA(Asn/Gln) amidotransferase subunit C (95 aa).

Belongs to the GatC family. Heterotrimer of A, B and C subunits.

The catalysed reaction is L-glutamyl-tRNA(Gln) + L-glutamine + ATP + H2O = L-glutaminyl-tRNA(Gln) + L-glutamate + ADP + phosphate + H(+). It carries out the reaction L-aspartyl-tRNA(Asn) + L-glutamine + ATP + H2O = L-asparaginyl-tRNA(Asn) + L-glutamate + ADP + phosphate + 2 H(+). Functionally, allows the formation of correctly charged Asn-tRNA(Asn) or Gln-tRNA(Gln) through the transamidation of misacylated Asp-tRNA(Asn) or Glu-tRNA(Gln) in organisms which lack either or both of asparaginyl-tRNA or glutaminyl-tRNA synthetases. The reaction takes place in the presence of glutamine and ATP through an activated phospho-Asp-tRNA(Asn) or phospho-Glu-tRNA(Gln). The sequence is that of Aspartyl/glutamyl-tRNA(Asn/Gln) amidotransferase subunit C from Roseobacter denitrificans (strain ATCC 33942 / OCh 114) (Erythrobacter sp. (strain OCh 114)).